Reading from the N-terminus, the 353-residue chain is Mitogen-activated protein kinase mpkB (353 aa).

One can recognise a Protein kinase domain in the interval 21–309 (YEIQDVIGEG…VEEALRHPYL (289 aa)). Residues 27-35 (IGEGAYGVV) and lysine 50 contribute to the ATP site. Aspartate 145 serves as the catalytic Proton acceptor.

It belongs to the protein kinase superfamily. Ser/Thr protein kinase family. MAP kinase subfamily. It depends on Mg(2+) as a cofactor.

It localises to the nucleus. The enzyme catalyses L-seryl-[protein] + ATP = O-phospho-L-seryl-[protein] + ADP + H(+). It carries out the reaction L-threonyl-[protein] + ATP = O-phospho-L-threonyl-[protein] + ADP + H(+). Its activity is regulated as follows. Activated by threonine and tyrosine phosphorylation. Functionally, mitogen-activated protein kinase (MAPK) that plays a role in conidiation and regulation of secondary metabolite biosynthesis. Acts as a repressor of dihydroxynaphthalene (DHN)-melanin production. The protein is Mitogen-activated protein kinase mpkB of Aspergillus fumigatus (strain CBS 144.89 / FGSC A1163 / CEA10) (Neosartorya fumigata).